The chain runs to 598 residues: CBP80/20-dependent translation initiation factor (598 aa).

M1 carries the post-translational modification N-acetylmethionine. Residues 1 to 18 (MENSSAASASSEAGSSRS) are compositionally biased toward low complexity. 3 disordered regions span residues 1–20 (MENSSAASASSEAGSSRSQE), 43–90 (DKTE…SKDN), and 180–336 (IAHT…RIGE). An interaction with NCBP1/CBP80 region spans residues 1–305 (MENSSAASAS…APRSPDTLAP (305 aa)). Position 18 is a phosphoserine (S18). The segment covering 43–55 (DKTEGDGESERTQ) has biased composition (basic and acidic residues). Over residues 56–75 (SHISQWTADCSEPLDSSCSF) the composition is skewed to polar residues. A compositionally biased stretch (basic residues) spans 183–198 (TKKLFRRRRNDRRRQQ). Residues 258–272 (PPGDKGEAGAHRNAK) show a composition bias toward basic and acidic residues. T289 bears the Phosphothreonine mark. S299 is subject to Phosphoserine. Over residues 321 to 336 (VETKRKDSILPERIGE) the composition is skewed to basic and acidic residues. The MIF4G domain maps to 376–577 (IEILNSMRNN…LEVIELHANS (202 aa)).

This sequence belongs to the CTIF family. Interacts with NCBP1/CBP80; the interaction is direct. Associates with the eukaryotic translation initiation factor 3 (eIF-3) complex. In terms of tissue distribution, widely expressed.

The protein resides in the cytoplasm. It localises to the perinuclear region. Functionally, specifically required for the pioneer round of mRNA translation mediated by the cap-binding complex (CBC), that takes place during or right after mRNA export via the nuclear pore complex (NPC). Acts via its interaction with the NCBP1/CBP80 component of the CBC complex and recruits the 40S small subunit of the ribosome via eIF3. In contrast, it is not involved in steady state translation, that takes place when the CBC complex is replaced by cytoplasmic cap-binding protein eIF4E. Also required for nonsense-mediated mRNA decay (NMD), the pioneer round of mRNA translation mediated by the cap-binding complex playing a central role in nonsense-mediated mRNA decay (NMD). The sequence is that of CBP80/20-dependent translation initiation factor (CTIF) from Homo sapiens (Human).